The sequence spans 534 residues: CTP synthase (534 aa).

Residues 1-266 (MKTKFLFITG…DERIIDYLNI (266 aa)) form an amidoligase domain region. S14 contributes to the CTP binding site. A UTP-binding site is contributed by S14. Residues 15 to 20 (SLGKGL) and D72 contribute to the ATP site. Mg(2+) is bound by residues D72 and E140. CTP contacts are provided by residues 147 to 149 (DIE), 187 to 192 (KTKPTQ), and K223. Residues 187–192 (KTKPTQ) and K223 each bind UTP. 239 to 241 (RDV) is an ATP binding site. The 243-residue stretch at 291 to 533 (TIAIVGKYVE…VGASLKHHGE (243 aa)) folds into the Glutamine amidotransferase type-1 domain. G353 contacts L-glutamine. C380 functions as the Nucleophile; for glutamine hydrolysis in the catalytic mechanism. L-glutamine-binding positions include 381–384 (LGMQ), E404, and R461. Residues H506 and E508 contribute to the active site.

Belongs to the CTP synthase family. Homotetramer.

It carries out the reaction UTP + L-glutamine + ATP + H2O = CTP + L-glutamate + ADP + phosphate + 2 H(+). The catalysed reaction is L-glutamine + H2O = L-glutamate + NH4(+). The enzyme catalyses UTP + NH4(+) + ATP = CTP + ADP + phosphate + 2 H(+). It participates in pyrimidine metabolism; CTP biosynthesis via de novo pathway; CTP from UDP: step 2/2. With respect to regulation, allosterically activated by GTP, when glutamine is the substrate; GTP has no effect on the reaction when ammonia is the substrate. The allosteric effector GTP functions by stabilizing the protein conformation that binds the tetrahedral intermediate(s) formed during glutamine hydrolysis. Inhibited by the product CTP, via allosteric rather than competitive inhibition. Its function is as follows. Catalyzes the ATP-dependent amination of UTP to CTP with either L-glutamine or ammonia as the source of nitrogen. Regulates intracellular CTP levels through interactions with the four ribonucleotide triphosphates. In Syntrophotalea carbinolica (strain DSM 2380 / NBRC 103641 / GraBd1) (Pelobacter carbinolicus), this protein is CTP synthase.